The primary structure comprises 289 residues: Probable endonuclease 4 (289 aa).

Zn(2+) contacts are provided by H76, H116, E152, D186, H189, H220, D233, H235, and E265.

It belongs to the AP endonuclease 2 family. Zn(2+) is required as a cofactor.

The enzyme catalyses Endonucleolytic cleavage to 5'-phosphooligonucleotide end-products.. Its function is as follows. Endonuclease IV plays a role in DNA repair. It cleaves phosphodiester bonds at apurinic or apyrimidinic (AP) sites, generating a 3'-hydroxyl group and a 5'-terminal sugar phosphate. The sequence is that of Probable endonuclease 4 from Malacoplasma penetrans (strain HF-2) (Mycoplasma penetrans).